A 227-amino-acid polypeptide reads, in one-letter code: Nodulation protein W (227 aa).

The Response regulatory domain occupies 21-135 (IVFVVEDDIS…ELLDAVVAAT (115 aa)). Residue Asp-70 is modified to 4-aspartylphosphate. The 66-residue stretch at 151 to 216 (LKSLFETLSP…DLIRMSETLG (66 aa)) folds into the HTH luxR-type domain. Positions 175-194 (NKQVAAELGLAEITVKIYRG) form a DNA-binding region, H-T-H motif.

Phosphorylated by NodV.

It is found in the cytoplasm. In terms of biological role, member of the two-component regulatory system NodV/NodW probably involved in the regulation of the transcription of genes involved in the nodulation process. The chain is Nodulation protein W (nodW) from Bradyrhizobium diazoefficiens (strain JCM 10833 / BCRC 13528 / IAM 13628 / NBRC 14792 / USDA 110).